We begin with the raw amino-acid sequence, 305 residues long: Phosphatidate cytidylyltransferase (305 aa).

7 helical membrane-spanning segments follow: residues 24–44 (LLVFLVILLCTSLYPSSAFIV), 97–117 (PEHVDLIPWFFLFFWTVHLVF), 124–144 (LGPIGSTGLALFCMLYVSVPI), 151–171 (LYGFVHTDTPFIGIWWAIFLI), 202–222 (TVVGFVAGCIASILVSLIFYS), 232–252 (IAMPWILVALGIILGISGFFG), and 277–297 (MLDVLDSLLLSTPIVYAILLI).

It belongs to the CDS family.

It localises to the cell membrane. The catalysed reaction is a 1,2-diacyl-sn-glycero-3-phosphate + CTP + H(+) = a CDP-1,2-diacyl-sn-glycerol + diphosphate. Its pathway is phospholipid metabolism; CDP-diacylglycerol biosynthesis; CDP-diacylglycerol from sn-glycerol 3-phosphate: step 3/3. The chain is Phosphatidate cytidylyltransferase (cdsA) from Chlamydia muridarum (strain MoPn / Nigg).